The chain runs to 632 residues: Bifunctional protein GlmU (632 aa).

The pyrophosphorylase stretch occupies residues 1–229; sequence MAERELSVAI…PQEIVGVNDR (229 aa). UDP-N-acetyl-alpha-D-glucosamine is bound by residues 11 to 14, K25, Q76, and 81 to 82; these read LAAG and GT. D106 serves as a coordination point for Mg(2+). Positions 143, 158, 173, and 227 each coordinate UDP-N-acetyl-alpha-D-glucosamine. N227 contributes to the Mg(2+) binding site. The segment at 230 to 250 is linker; that stretch reads RQLAQAYQILQDRLKEAWMEA. Residues 251 to 632 form an N-acetyltransferase region; that stretch reads GVTFVDPDSS…ADNSRPKSLQ (382 aa). UDP-N-acetyl-alpha-D-glucosamine is bound by residues R332 and K350. The active-site Proton acceptor is H362. Residues Y365 and N376 each coordinate UDP-N-acetyl-alpha-D-glucosamine. Acetyl-CoA contacts are provided by residues A379, 385 to 386, A422, and R441; that span reads NY. The disordered stretch occupies residues 600–632; the sequence is VAGDPCWPSPPPQPQQNQQTKPEADNSRPKSLQ. Positions 621–632 are enriched in basic and acidic residues; that stretch reads PEADNSRPKSLQ.

In the N-terminal section; belongs to the N-acetylglucosamine-1-phosphate uridyltransferase family. This sequence in the C-terminal section; belongs to the transferase hexapeptide repeat family. Homotrimer. The cofactor is Mg(2+).

Its subcellular location is the cytoplasm. It carries out the reaction alpha-D-glucosamine 1-phosphate + acetyl-CoA = N-acetyl-alpha-D-glucosamine 1-phosphate + CoA + H(+). The catalysed reaction is N-acetyl-alpha-D-glucosamine 1-phosphate + UTP + H(+) = UDP-N-acetyl-alpha-D-glucosamine + diphosphate. It functions in the pathway nucleotide-sugar biosynthesis; UDP-N-acetyl-alpha-D-glucosamine biosynthesis; N-acetyl-alpha-D-glucosamine 1-phosphate from alpha-D-glucosamine 6-phosphate (route II): step 2/2. The protein operates within nucleotide-sugar biosynthesis; UDP-N-acetyl-alpha-D-glucosamine biosynthesis; UDP-N-acetyl-alpha-D-glucosamine from N-acetyl-alpha-D-glucosamine 1-phosphate: step 1/1. It participates in bacterial outer membrane biogenesis; LPS lipid A biosynthesis. Its function is as follows. Catalyzes the last two sequential reactions in the de novo biosynthetic pathway for UDP-N-acetylglucosamine (UDP-GlcNAc). The C-terminal domain catalyzes the transfer of acetyl group from acetyl coenzyme A to glucosamine-1-phosphate (GlcN-1-P) to produce N-acetylglucosamine-1-phosphate (GlcNAc-1-P), which is converted into UDP-GlcNAc by the transfer of uridine 5-monophosphate (from uridine 5-triphosphate), a reaction catalyzed by the N-terminal domain. The chain is Bifunctional protein GlmU from Synechococcus sp. (strain JA-2-3B'a(2-13)) (Cyanobacteria bacterium Yellowstone B-Prime).